Here is a 101-residue protein sequence, read N- to C-terminus: Protein S100-A3 (101 aa).

The residue at position 2 (Ala2) is an N-acetylalanine. 2 EF-hand domains span residues 12-47 and 50-85; these read IVCT…TWTP and FREC…LCLY. Residues Lys28 and Glu33 each coordinate Ca(2+). The cysteines at positions 30 and 68 are disulfide-linked. At Arg51 the chain carries Citrulline; by PAD3. Ca(2+)-binding residues include Asp63, Asn65, Asp67, Glu69, and Glu74. Cys81 and Cys99 form a disulfide bridge. Positions 83, 86, 87, and 93 each coordinate Zn(2+).

This sequence belongs to the S-100 family. As to quaternary structure, homodimer and homotetramer for the citrullinated form. Post-translationally, more than half of the arginine residues undergo citrullination by PAD1 and PAD2. Arg-51 is specifically citrullinated by PAD3 and promotes tetramerization. As to expression, skin specific, specifically expressed at the inner endocuticle of hair fibers.

The protein localises to the cytoplasm. In terms of biological role, binds both calcium and zinc. May be involved in calcium-dependent cuticle cell differentiation, hair shaft and hair cuticular barrier formation. The chain is Protein S100-A3 (S100A3) from Homo sapiens (Human).